The sequence spans 122 residues: Large ribosomal subunit protein uL14 (122 aa).

The protein belongs to the universal ribosomal protein uL14 family. Part of the 50S ribosomal subunit. Forms a cluster with proteins L3 and L19. In the 70S ribosome, L14 and L19 interact and together make contacts with the 16S rRNA in bridges B5 and B8.

Functionally, binds to 23S rRNA. Forms part of two intersubunit bridges in the 70S ribosome. The sequence is that of Large ribosomal subunit protein uL14 from Pseudomonas fluorescens (strain ATCC BAA-477 / NRRL B-23932 / Pf-5).